Reading from the N-terminus, the 246-residue chain is Mast cell protease 9 (246 aa).

The N-terminal stretch at 1 to 18 (MQALLFLMALLLPSRAGA) is a signal peptide. Residues 19–20 (EE) constitute a propeptide, activation peptide. The 224-residue stretch at 21–244 (IIGGVESEPH…HVPWINRVIK (224 aa)) folds into the Peptidase S1 domain. Cysteine 50 and cysteine 66 are disulfide-bonded. Catalysis depends on charge relay system residues histidine 65 and aspartate 109. Cystine bridges form between cysteine 143–cysteine 208 and cysteine 174–cysteine 187. The active-site Charge relay system is the serine 202.

This sequence belongs to the peptidase S1 family. Granzyme subfamily. As to expression, selectively expressed in uterine mast cells.

The sequence is that of Mast cell protease 9 (Mcpt9) from Mus musculus (Mouse).